The chain runs to 301 residues: D-alanine--D-alanine ligase (301 aa).

Positions 102–295 (KAVFAAAGLP…FPALCAWMVE (194 aa)) constitute an ATP-grasp domain. 128 to 181 (PLPRPYVIKPVNEGSSVGVFILREGDNRRADIARAWRHGSVAMTEEYVPGRELT) is an ATP binding site. Residues aspartate 248, glutamate 262, and asparagine 264 each coordinate Mg(2+).

This sequence belongs to the D-alanine--D-alanine ligase family. Mg(2+) serves as cofactor. It depends on Mn(2+) as a cofactor.

It localises to the cytoplasm. The catalysed reaction is 2 D-alanine + ATP = D-alanyl-D-alanine + ADP + phosphate + H(+). Its pathway is cell wall biogenesis; peptidoglycan biosynthesis. Its function is as follows. Cell wall formation. This Acidiphilium cryptum (strain JF-5) protein is D-alanine--D-alanine ligase.